Consider the following 78-residue polypeptide: Probable cytochrome c oxidase subunit 6B (78 aa).

A CHCH domain is found at 21-64; it reads TKHCWANYVDYYGCVKHYNGDNSKCQTFFNSMNSLCPAAWISEW. The short motif at 24–34 is the Cx9C motif element; it reads CWANYVDYYGC. Cystine bridges form between Cys24–Cys56 and Cys34–Cys45. Positions 45-56 match the Cx10C motif motif; sequence CQTFFNSMNSLC.

It belongs to the cytochrome c oxidase subunit 6B family. Component of the cytochrome c oxidase (complex IV, CIV), a multisubunit enzyme composed of a catalytic core of 3 subunits and several supernumerary subunits. The complex exists as a monomer or a dimer and forms supercomplexes (SCs) in the inner mitochondrial membrane with ubiquinol-cytochrome c oxidoreductase (cytochrome b-c1 complex, complex III, CIII).

The protein localises to the mitochondrion inner membrane. Its pathway is energy metabolism; oxidative phosphorylation. Its function is as follows. Component of the cytochrome c oxidase, the last enzyme in the mitochondrial electron transport chain which drives oxidative phosphorylation. The respiratory chain contains 3 multisubunit complexes succinate dehydrogenase (complex II, CII), ubiquinol-cytochrome c oxidoreductase (cytochrome b-c1 complex, complex III, CIII) and cytochrome c oxidase (complex IV, CIV), that cooperate to transfer electrons derived from NADH and succinate to molecular oxygen, creating an electrochemical gradient over the inner membrane that drives transmembrane transport and the ATP synthase. Cytochrome c oxidase is the component of the respiratory chain that catalyzes the reduction of oxygen to water. Electrons originating from reduced cytochrome c in the intermembrane space (IMS) are transferred via the dinuclear copper A center (CU(A)) of subunit 2 and heme A of subunit 1 to the active site in subunit 1, a binuclear center (BNC) formed by heme A3 and copper B (CU(B)). The BNC reduces molecular oxygen to 2 water molecules using 4 electrons from cytochrome c in the IMS and 4 protons from the mitochondrial matrix. This chain is Probable cytochrome c oxidase subunit 6B, found in Dictyostelium discoideum (Social amoeba).